Here is a 325-residue protein sequence, read N- to C-terminus: Glutarate 2-hydroxylase (325 aa).

Fe cation contacts are provided by H160, D162, and H292.

Belongs to the glutarate hydroxylase family. Homotetramer. The cofactor is Fe(2+).

It catalyses the reaction glutarate + 2-oxoglutarate + O2 = (S)-2-hydroxyglutarate + succinate + CO2. Its pathway is amino-acid degradation. Functionally, acts as an alpha-ketoglutarate-dependent dioxygenase catalyzing hydroxylation of glutarate (GA) to L-2-hydroxyglutarate (L2HG). Functions in a L-lysine degradation pathway that proceeds via cadaverine, glutarate and L-2-hydroxyglutarate. This is Glutarate 2-hydroxylase from Citrobacter koseri (strain ATCC BAA-895 / CDC 4225-83 / SGSC4696).